Consider the following 97-residue polypeptide: Cell division topological specificity factor (97 aa).

The protein belongs to the MinE family.

Functionally, prevents the cell division inhibition by proteins MinC and MinD at internal division sites while permitting inhibition at polar sites. This ensures cell division at the proper site by restricting the formation of a division septum at the midpoint of the long axis of the cell. The polypeptide is Cell division topological specificity factor (Synechococcus sp. (strain RCC307)).